We begin with the raw amino-acid sequence, 266 residues long: Ribosomal RNA small subunit methyltransferase A (266 aa).

Residues N11, L13, G37, E57, D85, and N104 each contribute to the S-adenosyl-L-methionine site.

It belongs to the class I-like SAM-binding methyltransferase superfamily. rRNA adenine N(6)-methyltransferase family. RsmA subfamily.

It localises to the cytoplasm. The enzyme catalyses adenosine(1518)/adenosine(1519) in 16S rRNA + 4 S-adenosyl-L-methionine = N(6)-dimethyladenosine(1518)/N(6)-dimethyladenosine(1519) in 16S rRNA + 4 S-adenosyl-L-homocysteine + 4 H(+). In terms of biological role, specifically dimethylates two adjacent adenosines (A1518 and A1519) in the loop of a conserved hairpin near the 3'-end of 16S rRNA in the 30S particle. May play a critical role in biogenesis of 30S subunits. This is Ribosomal RNA small subunit methyltransferase A from Campylobacter jejuni subsp. jejuni serotype O:2 (strain ATCC 700819 / NCTC 11168).